The sequence spans 282 residues: MKALNANISTMSEVSRSATPQSDSPAQAEVTPEVCIRIANFNAWYGSFQAIHNLSLDVPRNQVTAFIGPSGCGKSTLLRWINRMNDIVPSANSRGTLMIDELDVLAQTTDVVNLRRRVGMVFQKPNPFPKSIYDNVAFGPKLHLYLSRAELDELVEWSLRKAAVWDEVKDRLHAPALGLSGGQQQRLCIARAIAVGPEVLLMDEPCSALDPASTLAIEDLIYELREQYTIVMVTHNMQQASRCSDRTAFFFEGKLVESGPTQDVFTKPQEKRTDDYVRGRFG.

Over residues 1–25 the composition is skewed to polar residues; that stretch reads MKALNANISTMSEVSRSATPQSDSP. A disordered region spans residues 1–26; that stretch reads MKALNANISTMSEVSRSATPQSDSPA. One can recognise an ABC transporter domain in the interval 36–277; sequence IRIANFNAWY…PQEKRTDDYV (242 aa). ATP is bound at residue 68–75; it reads GPSGCGKS.

It belongs to the ABC transporter superfamily. Phosphate importer (TC 3.A.1.7) family. As to quaternary structure, the complex is composed of two ATP-binding proteins (PstB), two transmembrane proteins (PstC and PstA) and a solute-binding protein (PstS).

It is found in the cell inner membrane. It catalyses the reaction phosphate(out) + ATP + H2O = ADP + 2 phosphate(in) + H(+). Part of the ABC transporter complex PstSACB involved in phosphate import. Responsible for energy coupling to the transport system. The chain is Phosphate import ATP-binding protein PstB from Rhodopirellula baltica (strain DSM 10527 / NCIMB 13988 / SH1).